Consider the following 142-residue polypeptide: MKTYSAKPESVKRDWYVVDASGKTLGRLATEVASRLRGKHKPEFTPHVDTGDYIVVINADKVAVTGKKASDKMYYRHTGYPGGLKEANFATLQAEKPEMIIEKAIKGMLPRNPLGRAMFRKLKVYAGTEHPHTAQQPQQLEI.

Belongs to the universal ribosomal protein uL13 family. In terms of assembly, part of the 50S ribosomal subunit.

In terms of biological role, this protein is one of the early assembly proteins of the 50S ribosomal subunit, although it is not seen to bind rRNA by itself. It is important during the early stages of 50S assembly. This is Large ribosomal subunit protein uL13 from Alcanivorax borkumensis (strain ATCC 700651 / DSM 11573 / NCIMB 13689 / SK2).